The chain runs to 198 residues: Recombination protein RecR (198 aa).

The segment at C56 to C71 adopts a C4-type zinc-finger fold. Residues K79–P174 enclose the Toprim domain.

It belongs to the RecR family.

Its function is as follows. May play a role in DNA repair. It seems to be involved in an RecBC-independent recombinational process of DNA repair. It may act with RecF and RecO. The chain is Recombination protein RecR from Erythrobacter litoralis (strain HTCC2594).